A 254-amino-acid polypeptide reads, in one-letter code: Probable phosphatase Shew185_1467 (254 aa).

The Zn(2+) site is built by His-8, His-10, His-16, His-41, Glu-74, His-102, His-132, Asp-193, and His-195.

It belongs to the PHP family. Zn(2+) is required as a cofactor.

This chain is Probable phosphatase Shew185_1467, found in Shewanella baltica (strain OS185).